A 743-amino-acid polypeptide reads, in one-letter code: Phenylalanine ammonia-lyase 1 (743 aa).

Residue Y120 is the Proton donor/acceptor of the active site. The 5-imidazolinone (Ala-Gly) cross-link spans 224–226 (ASG). At S225 the chain carries 2,3-didehydroalanine (Ser). N287, Q377, R383, N413, K484, E512, and N515 together coordinate (E)-cinnamate.

The protein belongs to the PAL/histidase family. Homotetramer. Contains an active site 4-methylidene-imidazol-5-one (MIO), which is formed autocatalytically by cyclization and dehydration of residues Ala-Ser-Gly.

The protein localises to the cytoplasm. It catalyses the reaction L-phenylalanine = (E)-cinnamate + NH4(+). Its pathway is phenylpropanoid metabolism; trans-cinnamate biosynthesis; trans-cinnamate from L-phenylalanine: step 1/1. In terms of biological role, catalyzes the non-oxidative deamination of L-phenylalanine to form trans-cinnamic acid and a free ammonium ion. Facilitates the commitment step in phenylpropanoid pathways that produce secondary metabolites such as lignins, coumarins and flavonoids. The polypeptide is Phenylalanine ammonia-lyase 1 (Pleurotus ostreatus (Oyster mushroom)).